The primary structure comprises 329 residues: Aspartate--ammonia ligase (329 aa).

Belongs to the class-II aminoacyl-tRNA synthetase family. AsnA subfamily.

Its subcellular location is the cytoplasm. It catalyses the reaction L-aspartate + NH4(+) + ATP = L-asparagine + AMP + diphosphate + H(+). Its pathway is amino-acid biosynthesis; L-asparagine biosynthesis; L-asparagine from L-aspartate (ammonia route): step 1/1. This Ureaplasma parvum serovar 3 (strain ATCC 27815 / 27 / NCTC 11736) protein is Aspartate--ammonia ligase.